The primary structure comprises 24 residues: Brevinin-1BYc (24 aa).

Cys-18 and Cys-24 are disulfide-bonded.

In terms of tissue distribution, expressed by the skin glands.

Its subcellular location is the secreted. Functionally, antibacterial activity against Gram-positive bacterium S.aureus. Weak antifungal activity against C.albicans. The protein is Brevinin-1BYc of Rana boylii (Foothill yellow-legged frog).